Consider the following 281-residue polypeptide: MSLSALESTINSAFDARDGISTSTKGEVREAVDQVLETLDKGEARVAERGADGKWKVNQWLKKAVLLSFRLNDMGVIPGGPGQATWWDKVPSKFEGWGENRFRDAGFRAVPGAVVRRSAFIAKNVVLMPSFVNLGAYVDESTMVDTWATVGSCAQIGKRVHISGGAGIGGVLEPLQAEPVIIEDDCFIGARSEVAEGVIVRKGAVLAMGVFLGASTKIVDRDTGEVFIGEVPEYSVVVPGALPGKPMKNGHIGPSTACAVIVKRVDERTRSKTSINELLRD.

2 residues coordinate substrate: R108 and D145.

The protein belongs to the transferase hexapeptide repeat family. As to quaternary structure, homotrimer.

It localises to the cytoplasm. The catalysed reaction is (S)-2,3,4,5-tetrahydrodipicolinate + succinyl-CoA + H2O = (S)-2-succinylamino-6-oxoheptanedioate + CoA. Its pathway is amino-acid biosynthesis; L-lysine biosynthesis via DAP pathway; LL-2,6-diaminopimelate from (S)-tetrahydrodipicolinate (succinylase route): step 1/3. The protein is 2,3,4,5-tetrahydropyridine-2,6-dicarboxylate N-succinyltransferase of Bradyrhizobium diazoefficiens (strain JCM 10833 / BCRC 13528 / IAM 13628 / NBRC 14792 / USDA 110).